The sequence spans 354 residues: 3-dehydroquinate synthase (354 aa).

NAD(+) contacts are provided by residues Asp-61 to Lys-66, Thr-119 to Thr-120, Lys-132, Lys-141, and Phe-159 to Thr-162. Zn(2+) contacts are provided by Glu-174, His-238, and His-254.

Belongs to the sugar phosphate cyclases superfamily. Dehydroquinate synthase family. NAD(+) is required as a cofactor. The cofactor is Co(2+). It depends on Zn(2+) as a cofactor.

It localises to the cytoplasm. The catalysed reaction is 7-phospho-2-dehydro-3-deoxy-D-arabino-heptonate = 3-dehydroquinate + phosphate. It participates in metabolic intermediate biosynthesis; chorismate biosynthesis; chorismate from D-erythrose 4-phosphate and phosphoenolpyruvate: step 2/7. In terms of biological role, catalyzes the conversion of 3-deoxy-D-arabino-heptulosonate 7-phosphate (DAHP) to dehydroquinate (DHQ). This Saccharolobus solfataricus (strain ATCC 35092 / DSM 1617 / JCM 11322 / P2) (Sulfolobus solfataricus) protein is 3-dehydroquinate synthase.